The chain runs to 911 residues: MSGRDNRGAGGGGGGGGGGGHHHQPLSSAMGKLKEKLTRAGEELGYHRVESNLSTSNTGTSLDTILPEDPFPFPQAAPQRHPQQQFPHLQSPQQQRQQLQQQQLQQQQLHLQQPQQQLQQQQQPQQQLRLLHDVDDEPPLSFRPLLEDVDINEPPQQIHVQQQQQQLPRTALRASGSLELTPLPPPPTSLEPHRDRQQRSIVTGGEELQRSKQSLKGSRVSFEKPRGEQLPAKAAESSDEDSFEDKRIGFQQQKATSVDHKGILKDLKHILANDNRRQFQAKKHVSLDIKGTRFLKDLLKDSSSEEEFHKTRREFQGRKHQSLDPRVTFKLDKVLQGSSTDSDEEGDDAEHKRLIHRPKDITKPVIIDLKDLESESDEDFLTSRQNFQQQRSISTDSRKSRRLYEMDEMGNKRGDNIRHAVPFVRQITEDGKPKLEVYRPTTNPIYIWTQVLAALSVSLGSLVVGFASAYTSPALVSMTNTNLTSFVVTPQAASWVGGIMPLAGLAGGIAGGPFIEYLGRRNTILATAVPFIVSWLLIACAVNVIMVLCGRFLAGFCVGIASLSLPVYLGETVQPEVRGTLGLLPTAFGNIGILLCFVAGTYMDWSMLAFLGASLPVPFLILMFLIPETPRWYVSRGREERARKALVWLRGKEADVEPELKGLMRSQADADRQATQNKMLELLKRSNLKPLSISLGLMFFQQLSGINAVIFYTVQIFQDAGSTIDGNVCTIIVGVVNFAATFIATILIDRAGRKVLLYVSNVMMVLTLFVLGGFFYCKSSGMDTSNVGWLPLSCFVIYILGFSLGFGPIPWLMMGEILPAKIRGSAASVATAFNWSCTFVVTKSFQDMIDFMGAHGAFWMFGAICFIGLFFVIFYVPETQGKTLEDIERKMMGRVRRMSSVANIKPLSFNM.

A disordered region spans residues M1 to T256. Residues M1 to Y446 are Cytoplasmic-facing. Residues G8–G19 show a composition bias toward gly residues. Positions K32–E50 are enriched in basic and acidic residues. Low complexity-rich tracts occupy residues S51–T64, A76–R129, and Q156–Q166. 3 positions are modified to phosphoserine: S302, S303, and S304. Positions V334–I355 are disordered. A phosphoserine mark is found at S374 and S376. A disordered region spans residues F380 to R402. Residues R384–T395 show a composition bias toward polar residues. Residues I447 to A467 traverse the membrane as a helical segment. The Extracellular portion of the chain corresponds to S468–S494. N-linked (GlcNAc...) asparagine glycosylation is present at N482. The chain crosses the membrane as a helical span at residues W495 to I515. The Cytoplasmic portion of the chain corresponds to E516–T527. Residues A528 to L548 form a helical membrane-spanning segment. Residues C549–R551 lie on the Extracellular side of the membrane. A helical membrane pass occupies residues F552–T572. Residues V573 to R578 lie on the Cytoplasmic side of the membrane. The helical transmembrane segment at G579 to A599 threads the bilayer. Topologically, residues G600 to S606 are extracellular. The chain crosses the membrane as a helical span at residues M607 to P627. The Cytoplasmic segment spans residues E628–P690. A helical membrane pass occupies residues L691–F711. Residues Y712–N727 lie on the Extracellular side of the membrane. The helical transmembrane segment at V728–I748 threads the bilayer. Residues D749–K754 are Cytoplasmic-facing. Residues V755 to F775 traverse the membrane as a helical segment. Topologically, residues Y776 to C794 are extracellular. A helical membrane pass occupies residues F795–G815. The Cytoplasmic portion of the chain corresponds to E816 to K821. Residues I822–T842 traverse the membrane as a helical segment. The Extracellular portion of the chain corresponds to K843–H855. The chain crosses the membrane as a helical span at residues G856–V876. At P877 to M911 the chain is on the cytoplasmic side. A phosphoserine mark is found at S899 and S900.

This sequence belongs to the major facilitator superfamily. Sugar transporter (TC 2.A.1.1) family. Trehalose transporter subfamily.

The protein localises to the cell membrane. Low-capacity facilitative transporter for trehalose. Does not transport maltose, sucrose or lactose. Mediates the bidirectional transfer of trehalose. Responsible for the transport of trehalose synthesized in the fat body and the incorporation of trehalose into other tissues that require a carbon source, thereby regulating trehalose levels in the hemolymph. The protein is Facilitated trehalose transporter Tret1 of Drosophila virilis (Fruit fly).